A 184-amino-acid chain; its full sequence is Ethylene-responsive transcription factor ERF010 (184 aa).

Residues 20-77 (PYKGIRMRKWGKWVAEIREPNKRSRLWLGSYSTPEAAARAYDTAVFYLRGPTARLNFP) constitute a DNA-binding region (AP2/ERF). Residues 123–184 (QNRDSDVDNK…SSDEEWESKH (62 aa)) form a disordered region. Basic and acidic residues predominate over residues 161-172 (LLDRVDLNKLPD). Residues 174-184 (ESSDEEWESKH) show a composition bias toward acidic residues.

This sequence belongs to the AP2/ERF transcription factor family. ERF subfamily.

Its subcellular location is the nucleus. Its function is as follows. Probably acts as a transcriptional activator. Binds to the GCC-box pathogenesis-related promoter element. May be involved in the regulation of gene expression by stress factors and by components of stress signal transduction pathways. The polypeptide is Ethylene-responsive transcription factor ERF010 (ERF010) (Arabidopsis thaliana (Mouse-ear cress)).